The primary structure comprises 458 residues: Protein adenylyltransferase FICD (458 aa).

Residues 1 to 23 (MILMPMASVVAVAEPKWVSVWGR) are Cytoplasmic-facing. A helical; Signal-anchor for type II membrane protein transmembrane segment spans residues 24–44 (FLWMTLLSMALGSLLALLLPL). Over 45 to 458 (GAVEEQCLAV…GFKETLPVRP (414 aa)) the chain is Lumenal. An O-AMP-serine; by autocatalysis modification is found at serine 79. Threonine 80 bears the O-AMP-threonine; by autocatalysis mark. TPR repeat units follow at residues 106–139 (AKAALNQALEMKRQGKRGKAHKLFLHALKMDPGF) and 140–173 (VDALNELGIFSEEDKDIIQADYLYTRALTISPFH). Threonine 183 is subject to O-AMP-threonine; by autocatalysis. The Inhibitory (S/T)XXXE(G/N) motif signature appears at 230-235 (TVAIEG). ATP is bound at residue glutamate 234. Asparagine 275 is a glycosylation site (N-linked (GlcNAc...) asparagine). In terms of domain architecture, Fido spans 285 to 420 (VTIDHMLEIH…VRPFIRFIAK (136 aa)). 316–319 (VGHH) provides a ligand contact to ATP. The active site involves histidine 363. ATP is bound by residues 367-374 (DGNGRTSR), 399-400 (YY), and asparagine 407.

The protein belongs to the fic family. As to quaternary structure, homodimer. Interacts with HD. Mg(2+) serves as cofactor. The cofactor is Mn(2+). In terms of processing, auto-AMPylated in vitro.

It localises to the endoplasmic reticulum membrane. The enzyme catalyses L-tyrosyl-[protein] + ATP = O-(5'-adenylyl)-L-tyrosyl-[protein] + diphosphate. It catalyses the reaction 3-O-(5'-adenylyl)-L-threonyl-[protein] + H2O = L-threonyl-[protein] + AMP + H(+). It carries out the reaction L-threonyl-[protein] + ATP = 3-O-(5'-adenylyl)-L-threonyl-[protein] + diphosphate. With respect to regulation, the side chain of Glu-234 determines which of the two opposing activities (AMPylase or de-AMPylase) will take place. In response to endoplasmic reticulum stress, mediates de-AMPylase activity. Adenylyltransferase activity is inhibited by the inhibitory helix present at the N-terminus: Glu-234 binds ATP and competes with ATP-binding at Arg-374, thereby preventing adenylyltransferase activity. In unstressed cells, disengagement of Glu-234 promotes adenylyltransferase activity. Activation dissociates ATP-binding from Glu-234, allowing ordered binding of the entire ATP moiety with the alpha-phosphate in an orientation that is productive for accepting an incoming target hydroxyl side chain. Its function is as follows. Protein that can both mediate the addition of adenosine 5'-monophosphate (AMP) to specific residues of target proteins (AMPylation), and the removal of the same modification from target proteins (de-AMPylation), depending on the context. The side chain of Glu-231 determines which of the two opposing activities (AMPylase or de-AMPylase) will take place. Acts as a key regulator of the ERN1/IRE1-mediated unfolded protein response (UPR) by mediating AMPylation or de-AMPylation of HSPA5/BiP. In unstressed cells, acts as an adenylyltransferase by mediating AMPylation of HSPA5/BiP at 'Thr-518', thereby inactivating it. In response to endoplasmic reticulum stress, acts as a phosphodiesterase by mediating removal of ATP (de-AMPylation) from HSPA5/BiP at 'Thr-518', leading to restore HSPA5/BiP activity. Although it is able to AMPylate RhoA, Rac and Cdc42 Rho GTPases in vitro, Rho GTPases do not constitute physiological substrates. The sequence is that of Protein adenylyltransferase FICD from Rattus norvegicus (Rat).